The primary structure comprises 488 residues: Glutamyl-tRNA(Gln) amidotransferase subunit A (488 aa).

Residues lysine 77 and serine 152 each act as charge relay system in the active site. Serine 176 (acyl-ester intermediate) is an active-site residue.

The protein belongs to the amidase family. GatA subfamily. In terms of assembly, heterotrimer of A, B and C subunits.

The catalysed reaction is L-glutamyl-tRNA(Gln) + L-glutamine + ATP + H2O = L-glutaminyl-tRNA(Gln) + L-glutamate + ADP + phosphate + H(+). Its function is as follows. Allows the formation of correctly charged Gln-tRNA(Gln) through the transamidation of misacylated Glu-tRNA(Gln) in organisms which lack glutaminyl-tRNA synthetase. The reaction takes place in the presence of glutamine and ATP through an activated gamma-phospho-Glu-tRNA(Gln). In Streptococcus agalactiae serotype III (strain NEM316), this protein is Glutamyl-tRNA(Gln) amidotransferase subunit A.